The sequence spans 286 residues: MFGFVKYLFKLQFLFILAAVLAGLYRTEIKQFANRHAANYVDKADVETVSLQFKAANENTATVLTSAELSKYNGEDGQPIYLALLGSVFDVTRGIKHYGTGCSYNFFVGRDASVAFISGEFEEYDPQTADDVLTLKPNDLLGLANWRDFYEKEYIYKGKLIGRFYDEQGEPTTYYHKYLALLEQAQIAKAEVDELRSKYPGCNIEWSEAKGTRVWCTNTSGDGKERAWTGFPRKLYSRGNKNFNCACVPESELDQIDAEGQAAHGDVMFKTYDNCSSRAKECFYRV.

The first 23 residues, 1–23 (MFGFVKYLFKLQFLFILAAVLAG), serve as a signal peptide directing secretion. The 85-residue stretch at 61–145 (ATVLTSAELS…KPNDLLGLAN (85 aa)) folds into the Cytochrome b5 heme-binding domain. The stretch at 176 to 200 (HKYLALLEQAQIAKAEVDELRSKYP) forms a coiled coil.

The protein belongs to the cytochrome b5 family. MAPR subfamily.

Its subcellular location is the secreted. Its function is as follows. Heme-binding protein. The sequence is that of Neuferricin homolog from Drosophila pseudoobscura pseudoobscura (Fruit fly).